The following is a 353-amino-acid chain: uncharacterized protein (353 aa).

9 consecutive transmembrane segments (helical) span residues 16–36 (AAYI…ISCG), 77–97 (VVLA…FQGL), 106–128 (YTLG…GLHL), 140–160 (SVAA…LVHA), 167–187 (LILT…LIIA), 208–228 (GWSY…LLII), 263–283 (LLTG…LVIP), 296–316 (HLLP…DLLS), and 323–343 (IELP…ALIL).

It belongs to the binding-protein-dependent transport system permease family. FecCD subfamily. In terms of assembly, the complex is composed of two ATP-binding proteins (YvrA), two transmembrane proteins (YvrB) and a solute-binding protein (YvrC).

Its subcellular location is the cell membrane. Probably part of an ABC transporter complex. Probably responsible for the translocation of the substrate across the membrane. This is an uncharacterized protein from Bacillus subtilis (strain 168).